The sequence spans 101 residues: MDPQNALYYQPRVPTAAPTSGGVPWSRVGEVAILSFVALICFYLLYLWVLRDLILVLKARQGRSTEELIFGGQAVDRSNPIPNLPAPPSQGNPGPFVPGTG.

A helical transmembrane segment spans residues 30 to 50; it reads EVAILSFVALICFYLLYLWVL. The disordered stretch occupies residues 75–101; the sequence is VDRSNPIPNLPAPPSQGNPGPFVPGTG.

The protein belongs to the mastrevirus movement protein family. Interacts with the capsid protein (CP). Part of a MP-CP-viral DNA complex.

Its subcellular location is the host membrane. Functionally, involved in the viral transport within, and between cells. The polypeptide is Movement protein (Maize streak virus genotype A (isolate South Africa) (MSV)).